A 466-amino-acid polypeptide reads, in one-letter code: Phytase A (466 aa).

Residues 1–19 (MAVLSVLLPITFLLSSVTG) form the signal peptide. Cys-30 and Cys-39 are joined by a disulfide. Gln-49, Tyr-50, Arg-80, His-81, Arg-84, and Thr-87 together coordinate 1D-myo-inositol hexakisphosphate. Disulfide bonds link Cys-70–Cys-413, Cys-214–Cys-464, Cys-263–Cys-281, and Cys-435–Cys-443. Residue His-81 is the Nucleophile of the active site. Asn-104 and Asn-119 each carry an N-linked (GlcNAc...) asparagine glycan. Arg-164 contacts 1D-myo-inositol hexakisphosphate. 2 N-linked (GlcNAc...) asparagine glycosylation sites follow: Asn-206 and Asn-219. A 1D-myo-inositol hexakisphosphate-binding site is contributed by Lys-300. Residues Asn-338 and Asn-351 are each glycosylated (N-linked (GlcNAc...) asparagine). Positions 360 and 361 each coordinate 1D-myo-inositol hexakisphosphate. A glycan (N-linked (GlcNAc...) asparagine) is linked at Asn-375.

Belongs to the histidine acid phosphatase family. In terms of assembly, monomer.

The protein resides in the secreted. The enzyme catalyses 1D-myo-inositol hexakisphosphate + H2O = 1D-myo-inositol 1,2,4,5,6-pentakisphosphate + phosphate. The catalysed reaction is 1D-myo-inositol 1,2,4,5,6-pentakisphosphate + H2O = 1D-myo-inositol 1,2,5,6-tetrakisphosphate + phosphate. It carries out the reaction 1D-myo-inositol 1,2,5,6-tetrakisphosphate + H2O = 1D-myo-inositol 1,2,6-trisphosphate + phosphate. It catalyses the reaction 1D-myo-inositol 1,2,6-trisphosphate + H2O = 1D-myo-inositol 1,2-bisphosphate + phosphate. The enzyme catalyses 1D-myo-inositol 1,2-bisphosphate + H2O = 1D-myo-inositol 2-phosphate + phosphate. Functionally, catalyzes the phosphate monoester hydrolysis of phytic acid (myo-inositol hexakisphosphate), which results in the stepwise formation of myo-inositol pentakis-, tetrakis-, tris-, bis-, and monophosphates, as well as the liberation of inorganic phosphate. Myo-inositol 2-monophosphate is the end product. The polypeptide is Phytase A (phyA) (Aspergillus oryzae (strain ATCC 42149 / RIB 40) (Yellow koji mold)).